The following is a 260-amino-acid chain: ProSAAS (260 aa).

Residues 1-33 (MAGSPLLWGPRAGGVGLLVLLLLGLFRPPPALC) form the signal peptide. Residues 34–215 (ARPVKEPRGL…SADSEGVAAP (182 aa)) form a proSAAS(1-180) region. Thr53 carries an O-linked (GalNAc...) threonine glycan. Residues 165-188 (RPRPPVYDDGPAGPDAEEAGDETP) are disordered. Acidic residues predominate over residues 179 to 188 (DAEEAGDETP). Residues 221–260 (AADHDVGSELPPEGVLGALLRVKRLETPAPQVPARRLLPP) are C-terminal inhibitory domain; interacts with PCSK1. Ser228 is a glycosylation site (O-linked (GalNAc...) serine). The Sufficient for inhibition of PCSK1 motif lies at 239–244 (LLRVKR). The O-linked (GalNAc...) threonine glycan is linked to Thr247.

In terms of assembly, interacts via the C-terminal inhibitory domain with PCSK1 66 kDa form. Proteolytically cleaved in the Golgi. In terms of processing, O-glycosylated with a core 1 or possibly core 8 glycan. As to expression, expressed in brain and pancreas.

The protein localises to the secreted. Its subcellular location is the golgi apparatus. The protein resides in the trans-Golgi network. In terms of biological role, may function in the control of the neuroendocrine secretory pathway. Proposed be a specific endogenous inhibitor of PCSK1. ProSAAS and Big PEN-LEN, both containing the C-terminal inhibitory domain, but not the further processed peptides reduce PCSK1 activity in the endoplasmic reticulum and Golgi. It reduces the activity of the 84 kDa form but not the autocatalytically derived 66 kDa form of PCSK1. Subsequent processing of proSAAS may eliminate the inhibition. Slows down convertase-mediated processing of proopiomelanocortin and proenkephalin. May control the intracellular timing of PCSK1 rather than its total level of activity. Endogenous ligand for GPR171. Neuropeptide involved in the regulation of feeding. In Homo sapiens (Human), this protein is ProSAAS (PCSK1N).